The following is a 122-amino-acid chain: Beta-2-microglobulin (122 aa).

A signal peptide spans 1–23 (MFLRSTFVAALVACLAYIHLGDA). In terms of domain architecture, Ig-like C1-type spans 28–117 (PKVQIYSRNV…STLREATRFT (90 aa)). Cysteine 48 and cysteine 103 are oxidised to a cystine.

The protein belongs to the beta-2-microglobulin family. In terms of assembly, heterodimer of an alpha chain and a beta chain. Beta-2-microglobulin is the beta-chain of major histocompatibility complex class I molecules.

The protein localises to the secreted. Functionally, component of the class I major histocompatibility complex (MHC). Involved in the presentation of peptide antigens to the immune system. The chain is Beta-2-microglobulin (b2m) from Acipenser baerii (Siberian sturgeon).